The primary structure comprises 493 residues: Probable cytosol aminopeptidase (493 aa).

The Mn(2+) site is built by lysine 262 and aspartate 267. Residue lysine 274 is part of the active site. Residues aspartate 286, aspartate 345, and glutamate 347 each contribute to the Mn(2+) site. Arginine 349 is an active-site residue.

This sequence belongs to the peptidase M17 family. Mn(2+) serves as cofactor.

Its subcellular location is the cytoplasm. It carries out the reaction Release of an N-terminal amino acid, Xaa-|-Yaa-, in which Xaa is preferably Leu, but may be other amino acids including Pro although not Arg or Lys, and Yaa may be Pro. Amino acid amides and methyl esters are also readily hydrolyzed, but rates on arylamides are exceedingly low.. The catalysed reaction is Release of an N-terminal amino acid, preferentially leucine, but not glutamic or aspartic acids.. In terms of biological role, presumably involved in the processing and regular turnover of intracellular proteins. Catalyzes the removal of unsubstituted N-terminal amino acids from various peptides. This chain is Probable cytosol aminopeptidase, found in Cyanothece sp. (strain PCC 7425 / ATCC 29141).